A 1378-amino-acid polypeptide reads, in one-letter code: MSLVNFYGQLSNTQQFDQIRINIASPDQVRSWSFGEVTKPETINYRTFKPEKDGLFCARIFGPVKDYECLCGKYKRMKNRGIICEKCGVEVTVSRVRRERMGHIELAAPIAHIWFLKSLPSRISTLLDMTMRDLEKILYFENYVVLDPGLSILQKGELLTEEELQKAKDKYGEDAFTASIGAEVIQQMLKDLDFAKLKQELYEELQNTTSEVKKKKLVKRLKLVEDFLESENKPEWMIIDVLPVIPPEIRPLVMLDGGRFATSDLNELYRRVINRNNRLKKLIESKAPDIIVRNEKRMLQEAVDALFDNGRRGRAAKNANKRPFKSLSDMLKGKQGRFRQNLLGKRVDYSGRSVIVVGPELKLHQCGLPKKMALELFKPFIYSKLELYGIATTIKAAKRMVEAEKPEVWDVLEEVIREHPVLLNRAPTLHRLGIQAFEPLLIEGKAIQLHPLVCAAFNADFDGDQMAVHIPLSIEAQLEARVFMMSTNNILSPANGRPIIVPDKDIVLGLYYLTIAFDNEVGEGLMFSDLAEMEHALYNKFITIHTKIKYRRNQLNAEGKMVPVIVDTTYGRLMVGELLPSNPNIEFKFINKQLTKKDISLVIDLVYRHCGQKATVIFADQLMKLGFKYACSSGISFGMDDMVVPESKSTHINETQLEIKEFEQQYSNGLITYGEKYNKVVDAWSRCTDRVANDMMKEIATPPINDEPNHQKINAIYMMAVSGARGSFQQIKQLGGMRGLMTKSNGQIIQTPIISNFKEGLTEFECFNSANGMRKGQIDTALKTASSGYLTRKLVDVAQDCIITEKDCGTDKGIEVKSVIEGGEVIVSLAEKILGRTAAIDIFHPVTNDLILNKGELINEVKLEQIESAGLDRIMIKSVLTCESTTGICSICYGRDLATGTLVSEGEAIGVIAAQSIGEPGTQLTMRTFHIGGAATKGAEISSVEASYDAKVKIISRNVVINSEERKIVMSRNCELLLLDNNGNEKARHKIPYGARLLVDDGDMVIKTQKLAEWDPYTIPIITEKSGKVLFKDMVEGISIRDVTDEATGIPSKVIIESKQYSRGAELRPRIQLLDAKGEVITLSNGLEARYYLPVGAVLSVEDGVQISVGDIIARIPKESTTTKDITGGLPRVAELVEARRPKDHAVIAEVDGRVEFGKDYKSKRRIIIHPIDETMSIEYMVPKGKHVVVNEGDFVKKGDLLIDGNPVLQDILKVMGVEVLANYIVKEVQAVYRLQGVKIDDKHIEVIIRQMLQKVEITDSGGTTLLVGEKVDRHEFDEINEKAIKNGLKPAEAQLILQGITKASLQTRSFISAASFQETTRVLTEAAIAGKVDKLRGLKENVIVGRLVPAGTGYFMDKMRKAAVKLDEENSINADKG.

4 residues coordinate Zn(2+): Cys-69, Cys-71, Cys-84, and Cys-87. Asp-460, Asp-462, and Asp-464 together coordinate Mg(2+). Residues Cys-808, Cys-882, Cys-889, and Cys-892 each contribute to the Zn(2+) site.

It belongs to the RNA polymerase beta' chain family. In terms of assembly, the RNAP catalytic core consists of 2 alpha, 1 beta, 1 beta' and 1 omega subunit. When a sigma factor is associated with the core the holoenzyme is formed, which can initiate transcription. It depends on Mg(2+) as a cofactor. Requires Zn(2+) as cofactor.

The catalysed reaction is RNA(n) + a ribonucleoside 5'-triphosphate = RNA(n+1) + diphosphate. Its function is as follows. DNA-dependent RNA polymerase catalyzes the transcription of DNA into RNA using the four ribonucleoside triphosphates as substrates. This Rickettsia canadensis (strain McKiel) protein is DNA-directed RNA polymerase subunit beta'.